The chain runs to 1142 residues: SNF1-activating kinase 1 (1142 aa).

The interval 22–41 (ELEKSGTSSSVSLRSPTKSS) is disordered. T43 bears the Phosphothreonine mark. Polar residues predominate over residues 82 to 93 (QHQQHISSSLAK). The tract at residues 82-107 (QHQQHISSSLAKTPTTTSSFCSSGSS) is disordered. Over residues 94–107 (TPTTTSSFCSSGSS) the composition is skewed to low complexity. A Protein kinase domain is found at 133 to 448 (YEIIKELGHG…IPAIKKHPFV (316 aa)). ATP-binding positions include 139–147 (LGHGQHGKV) and K162. D277 (proton acceptor) is an active-site residue. Disordered regions lie at residues 634-678 (SPEA…VLPQ), 694-799 (NSLL…NSPI), 825-875 (SHFN…AYSE), 919-971 (KSSL…QKGS), 1005-1027 (SQPISKPGPLVLPKRLDQKKATT), and 1066-1142 (STNA…SALP). The span at 640-656 (SVSSVPNLPSAPSSTRL) shows a compositional bias: polar residues. The segment covering 694 to 706 (NSLLRNSSSHLTS) has biased composition (low complexity). Positions 707–741 (YNSGRPSSRTGRMNSRNQNLPKIPNSLSKISTTKL) are enriched in polar residues. Residues 742 to 751 (TELRVPKDSE) are compositionally biased toward basic and acidic residues. The segment covering 785–799 (NINSSDKSGSKNSPI) has biased composition (polar residues). 2 stretches are compositionally biased toward low complexity: residues 835–868 (SSQSSVTSSGSESDSELSSTSSSCTSGTQSRNSS) and 920–936 (SSLNLEPPSVSSSSSSS). Over residues 958–971 (SKLSELSNSPQKGS) the composition is skewed to polar residues. S964 is subject to Phosphoserine. Positions 1096–1111 (NDEHARNTSCHGDKGQ) are enriched in basic and acidic residues. Position 1126 is a phosphoserine (S1126). Positions 1133 to 1142 (NEEKRRSALP) are enriched in basic and acidic residues.

Belongs to the protein kinase superfamily. Ser/Thr protein kinase family. Associates with the SNF1 kinase complex. Interacts with SNF1 and REG1. In terms of processing, autophosphorylated.

The protein resides in the cytoplasm. The enzyme catalyses L-seryl-[protein] + ATP = O-phospho-L-seryl-[protein] + ADP + H(+). The catalysed reaction is L-threonyl-[protein] + ATP = O-phospho-L-threonyl-[protein] + ADP + H(+). Serine/threonine-protein kinase that phosphorylates SNF1, the catalytic subunit of the SNF1 kinase complex. Acts as an activator of the SNF1 kinase complex and controls its nuclear localization upon glucose and nitrogen depletion. Also required for SNF1 kinase activation under other stress conditions like alkaline pH or presence of cadmium. This chain is SNF1-activating kinase 1 (SAK1), found in Saccharomyces cerevisiae (strain ATCC 204508 / S288c) (Baker's yeast).